Reading from the N-terminus, the 525-residue chain is Delta(24)-sterol reductase homolog dhcr-24 (525 aa).

2 consecutive transmembrane segments (helical) span residues 27-47 (WVFVVPFLLPLSFLFNTVFDF) and 214-234 (SLFFAIPWSQGTICFLVAATI). In terms of domain architecture, FAD-binding PCMH-type spans 47 to 239 (FRNRIVHAVN…VAATIKIIPC (193 aa)).

Belongs to the FAD-binding oxidoreductase/transferase type 4 family. FAD serves as cofactor.

It is found in the endoplasmic reticulum membrane. The protein resides in the golgi apparatus membrane. The catalysed reaction is cholesterol + NADP(+) = desmosterol + NADPH + H(+). The enzyme catalyses lanosterol + NADPH + H(+) = 24,25-dihydrolanosterol + NADP(+). It carries out the reaction 5alpha-cholest-8-en-3beta-ol + NADP(+) = zymosterol + NADPH + H(+). It participates in steroid biosynthesis; cholesterol biosynthesis. Its function is as follows. Catalyzes the reduction of the delta-24 double bond of sterol intermediates during cholesterol biosynthesis. In Caenorhabditis elegans, this protein is Delta(24)-sterol reductase homolog dhcr-24.